Reading from the N-terminus, the 764-residue chain is Probable cyclic nucleotide-gated ion channel 20, chloroplastic (764 aa).

The N-terminal 25 residues, Met-1 to Arg-25, are a transit peptide targeting the chloroplast. Residues Met-1 to Thr-40 form a disordered region. A compositionally biased stretch (low complexity) spans Ser-19–Ser-33. At Ala-26–Thr-204 the chain is on the stromal side. A helical transmembrane segment spans residues Lys-205–Ile-225. The Lumenal portion of the chain corresponds to Lys-226–Lys-242. The chain crosses the membrane as a helical span at residues Ala-243–Phe-263. The Stromal segment spans residues Arg-264–Lys-295. A helical transmembrane segment spans residues Phe-296 to Pro-316. Residues Ala-317 to Asn-329 lie on the Lumenal side of the membrane. A helical transmembrane segment spans residues Leu-330 to Leu-350. At Ala-351–Asn-366 the chain is on the stromal side. The helical transmembrane segment at Phe-367 to Leu-387 threads the bilayer. The Lumenal portion of the chain corresponds to Phe-388–Gly-488. A helical membrane pass occupies residues Glu-489 to Gly-509. Over Asn-510–Leu-764 the chain is Stromal. Residues Ile-593–Thr-710 and Glu-658 each bind a nucleoside 3',5'-cyclic phosphate. The interval Phe-713–Asp-729 is calmodulin-binding. The IQ domain occupies Arg-734 to Ser-763.

It belongs to the cyclic nucleotide-gated cation channel (TC 1.A.1.5) family. Homotetramer or heterotetramer.

It is found in the plastid. The protein localises to the chloroplast thylakoid membrane. Functionally, probable cyclic nucleotide-gated ion channel. This is Probable cyclic nucleotide-gated ion channel 20, chloroplastic (CNGC20) from Arabidopsis thaliana (Mouse-ear cress).